Reading from the N-terminus, the 841-residue chain is DNA ligase (841 aa).

Residues 33 to 37 (DAQYD), 82 to 83 (SL), and Glu-114 each bind NAD(+). Lys-116 acts as the N6-AMP-lysine intermediate in catalysis. NAD(+)-binding residues include Arg-137, Glu-174, Lys-300, and Lys-324. The Zn(2+) site is built by Cys-418, Cys-421, Cys-436, and Cys-442. Residues 758-841 (EKTGPLDGQT…AFLGEHGQQR (84 aa)) form the BRCT domain.

It belongs to the NAD-dependent DNA ligase family. LigA subfamily. It depends on Mg(2+) as a cofactor. Requires Mn(2+) as cofactor.

It carries out the reaction NAD(+) + (deoxyribonucleotide)n-3'-hydroxyl + 5'-phospho-(deoxyribonucleotide)m = (deoxyribonucleotide)n+m + AMP + beta-nicotinamide D-nucleotide.. Its function is as follows. DNA ligase that catalyzes the formation of phosphodiester linkages between 5'-phosphoryl and 3'-hydroxyl groups in double-stranded DNA using NAD as a coenzyme and as the energy source for the reaction. It is essential for DNA replication and repair of damaged DNA. This is DNA ligase from Xanthomonas oryzae pv. oryzae (strain KACC10331 / KXO85).